Reading from the N-terminus, the 359-residue chain is 4-hydroxy-3-methylbut-2-en-1-yl diphosphate synthase (flavodoxin) (359 aa).

4 residues coordinate [4Fe-4S] cluster: cysteine 263, cysteine 266, cysteine 298, and glutamate 305.

It belongs to the IspG family. Requires [4Fe-4S] cluster as cofactor.

It carries out the reaction (2E)-4-hydroxy-3-methylbut-2-enyl diphosphate + oxidized [flavodoxin] + H2O + 2 H(+) = 2-C-methyl-D-erythritol 2,4-cyclic diphosphate + reduced [flavodoxin]. The protein operates within isoprenoid biosynthesis; isopentenyl diphosphate biosynthesis via DXP pathway; isopentenyl diphosphate from 1-deoxy-D-xylulose 5-phosphate: step 5/6. In terms of biological role, converts 2C-methyl-D-erythritol 2,4-cyclodiphosphate (ME-2,4cPP) into 1-hydroxy-2-methyl-2-(E)-butenyl 4-diphosphate. The protein is 4-hydroxy-3-methylbut-2-en-1-yl diphosphate synthase (flavodoxin) of Wolinella succinogenes (strain ATCC 29543 / DSM 1740 / CCUG 13145 / JCM 31913 / LMG 7466 / NCTC 11488 / FDC 602W) (Vibrio succinogenes).